A 97-amino-acid polypeptide reads, in one-letter code: uncharacterized protein (97 aa).

It to M.thermoautotrophicum MTH1236.

This is an uncharacterized protein from Methanocaldococcus jannaschii (strain ATCC 43067 / DSM 2661 / JAL-1 / JCM 10045 / NBRC 100440) (Methanococcus jannaschii).